The chain runs to 27 residues: Phospholipase A2 2 (27 aa).

Residues 1-27 (FMKVIDPGTKWCGPGNKAADDTDNGKN) form a disordered region. Residues tryptophan 11, glycine 13, and glycine 15 each contribute to the Ca(2+) site. Residues 18–27 (AADDTDNGKN) show a composition bias toward basic and acidic residues.

It belongs to the phospholipase A2 family. Requires Ca(2+) as cofactor. Expressed by the venom gland.

The protein resides in the secreted. The enzyme catalyses a 1,2-diacyl-sn-glycero-3-phosphocholine + H2O = a 1-acyl-sn-glycero-3-phosphocholine + a fatty acid + H(+). Functionally, PLA2 catalyzes the calcium-dependent hydrolysis of the 2-acyl groups in 3-sn-phosphoglycerides. The sequence is that of Phospholipase A2 2 from Opisthacanthus cayaporum (South American scorpion).